We begin with the raw amino-acid sequence, 351 residues long: Spermidine/putrescine import ATP-binding protein PotA (351 aa).

The 231-residue stretch at 6–236 (LELRNVTKEY…PENAWVANFI (231 aa)) folds into the ABC transporter domain. Residue 38 to 45 (GPSGCGKT) participates in ATP binding.

The protein belongs to the ABC transporter superfamily. Spermidine/putrescine importer (TC 3.A.1.11.1) family. The complex is composed of two ATP-binding proteins (PotA), two transmembrane proteins (PotB and PotC) and a solute-binding protein (PotD).

The protein resides in the cell membrane. The enzyme catalyses ATP + H2O + polyamine-[polyamine-binding protein]Side 1 = ADP + phosphate + polyamineSide 2 + [polyamine-binding protein]Side 1.. Part of the ABC transporter complex PotABCD involved in spermidine/putrescine import. Responsible for energy coupling to the transport system. The sequence is that of Spermidine/putrescine import ATP-binding protein PotA from Mycoplasma mycoides subsp. mycoides SC (strain CCUG 32753 / NCTC 10114 / PG1).